A 415-amino-acid polypeptide reads, in one-letter code: Serine hydroxymethyltransferase (415 aa).

(6S)-5,6,7,8-tetrahydrofolate is bound by residues Leu-117 and Gly-121–Leu-123. Position 226 is an N6-(pyridoxal phosphate)lysine (Lys-226). Glu-241 is a (6S)-5,6,7,8-tetrahydrofolate binding site.

The protein belongs to the SHMT family. In terms of assembly, homodimer. Pyridoxal 5'-phosphate is required as a cofactor.

The protein localises to the cytoplasm. The enzyme catalyses (6R)-5,10-methylene-5,6,7,8-tetrahydrofolate + glycine + H2O = (6S)-5,6,7,8-tetrahydrofolate + L-serine. It participates in one-carbon metabolism; tetrahydrofolate interconversion. Its pathway is amino-acid biosynthesis; glycine biosynthesis; glycine from L-serine: step 1/1. Its function is as follows. Catalyzes the reversible interconversion of serine and glycine with tetrahydrofolate (THF) serving as the one-carbon carrier. This reaction serves as the major source of one-carbon groups required for the biosynthesis of purines, thymidylate, methionine, and other important biomolecules. Also exhibits THF-independent aldolase activity toward beta-hydroxyamino acids, producing glycine and aldehydes, via a retro-aldol mechanism. This is Serine hydroxymethyltransferase from Bacillus licheniformis (strain ATCC 14580 / DSM 13 / JCM 2505 / CCUG 7422 / NBRC 12200 / NCIMB 9375 / NCTC 10341 / NRRL NRS-1264 / Gibson 46).